The chain runs to 283 residues: Ribosome biogenesis GTPase A (283 aa).

In terms of domain architecture, CP-type G spans 14-178; sequence RREVTEKLKL…LLDTPGILWP (165 aa). GTP-binding positions include 58–61, 86–87, 130–135, and G174; these read NKAD, NS, and NVGKST.

Belongs to the TRAFAC class YlqF/YawG GTPase family. MTG1 subfamily. As to quaternary structure, interacts with ctc. Interacts with the immature 50S ribosome subunit. 2 molecules of rbgA bind to one 50S subunit.

It localises to the cytoplasm. In terms of biological role, essential protein that is required for a late step of 50S ribosomal subunit assembly. Has GTPase activity that is stimulated by interaction with the immature 50S ribosome subunit. Binds to the 23S rRNA. Required for the association of ribosomal proteins rplP and rpmA with the large subunit. The protein is Ribosome biogenesis GTPase A of Bacillus licheniformis (strain ATCC 14580 / DSM 13 / JCM 2505 / CCUG 7422 / NBRC 12200 / NCIMB 9375 / NCTC 10341 / NRRL NRS-1264 / Gibson 46).